The following is a 206-amino-acid chain: Large ribosomal subunit protein uL4 (206 aa).

The protein belongs to the universal ribosomal protein uL4 family. Part of the 50S ribosomal subunit.

Functionally, one of the primary rRNA binding proteins, this protein initially binds near the 5'-end of the 23S rRNA. It is important during the early stages of 50S assembly. It makes multiple contacts with different domains of the 23S rRNA in the assembled 50S subunit and ribosome. Its function is as follows. Forms part of the polypeptide exit tunnel. The chain is Large ribosomal subunit protein uL4 from Methylorubrum populi (strain ATCC BAA-705 / NCIMB 13946 / BJ001) (Methylobacterium populi).